We begin with the raw amino-acid sequence, 194 residues long: Phosphoheptose isomerase (194 aa).

The SIS domain maps to 37-194 (ISNSFKQGGK…LIEFEMAKQA (158 aa)). 52-54 (NGG) is a binding site for substrate. Residues histidine 61 and glutamate 65 each contribute to the Zn(2+) site. Residues glutamate 65, 93 to 94 (ND), 119 to 121 (STS), serine 124, and glutamine 172 contribute to the substrate site. Positions 172 and 180 each coordinate Zn(2+).

Belongs to the SIS family. GmhA subfamily. In terms of assembly, homotetramer. Zn(2+) is required as a cofactor.

It localises to the cytoplasm. It catalyses the reaction 2 D-sedoheptulose 7-phosphate = D-glycero-alpha-D-manno-heptose 7-phosphate + D-glycero-beta-D-manno-heptose 7-phosphate. Its pathway is carbohydrate biosynthesis; D-glycero-D-manno-heptose 7-phosphate biosynthesis; D-glycero-alpha-D-manno-heptose 7-phosphate and D-glycero-beta-D-manno-heptose 7-phosphate from sedoheptulose 7-phosphate: step 1/1. Catalyzes the isomerization of sedoheptulose 7-phosphate in D-glycero-D-manno-heptose 7-phosphate. The protein is Phosphoheptose isomerase of Haemophilus influenzae (strain PittGG).